The following is a 975-amino-acid chain: Kinesin heavy chain (975 aa).

Residues 12-333 enclose the Kinesin motor domain; that stretch reads SIKVVCRFRP…LDFGRRAKTV (322 aa). 92 to 99 contacts ATP; sequence GQTSSGKT. Residues 180–321 are microtubule-binding; the sequence is VSSPEDVFEV…PASFNESETK (142 aa). The stretch at 335–931 forms a coiled coil; sequence NVVCVNEELT…DRIKEAVRQK (597 aa). The necessary for associating with milt stretch occupies residues 810–891; the sequence is VAKELQTLHN…LPKLEKRLRC (82 aa). The tract at residues 932 to 975 is globular; sequence HLGRRGPQAQIAKPIRSGQGAIAIRGGGAVGGPSPLAQVNPVNS.

This sequence belongs to the TRAFAC class myosin-kinesin ATPase superfamily. Kinesin family. Kinesin subfamily. Oligomer composed of two heavy chains and two light chains.

It localises to the cytoplasm. The protein localises to the cytoskeleton. In terms of biological role, kinesin is a microtubule-associated force-producing protein that may play a role in organelle transport. Milt and Miro form an essential protein complex that links Khc to mitochondria for light chain-independent, anterograde transport of mitochondria. The polypeptide is Kinesin heavy chain (Khc) (Drosophila melanogaster (Fruit fly)).